Consider the following 270-residue polypeptide: Phosphatidylinositol transfer protein alpha isoform (270 aa).

Residues threonine 58, lysine 60, glutamate 85, asparagine 89, threonine 96, and lysine 194 each contribute to the a 1,2-diacyl-sn-glycero-3-phospho-(1D-myo-inositol) site. At lysine 215 the chain carries N6-acetyllysine. Positions 250–263 (TKRQLDEMRQKDPV) are enriched in basic and acidic residues. The tract at residues 250–270 (TKRQLDEMRQKDPVKGMTADD) is disordered.

Belongs to the PtdIns transfer protein family. PI transfer class I subfamily.

It localises to the cytoplasm. The protein localises to the nucleus. It catalyses the reaction a 1,2-diacyl-sn-glycero-3-phosphocholine(in) = a 1,2-diacyl-sn-glycero-3-phosphocholine(out). The enzyme catalyses a 1,2-diacyl-sn-glycero-3-phospho-(1D-myo-inositol)(in) = a 1,2-diacyl-sn-glycero-3-phospho-(1D-myo-inositol)(out). With respect to regulation, phosphatidylinositol transfer activity is inhibited by N-ethylmaleimide. In terms of biological role, catalyzes the transfer of phosphatidylinositol (PI) and phosphatidylcholine (PC) between membranes. Shows a preference for PI and PC containing shorter saturated or monosaturated acyl chains at the sn-1 and sn-2 positions. Preference order for PC is C16:1 &gt; C16:0 &gt; C18:1 &gt; C18:0 &gt; C20:4 and for PI is C16:1 &gt; C16:0 &gt; C18:1 &gt; C18:0 &gt; C20:4 &gt; C20:3. In Homo sapiens (Human), this protein is Phosphatidylinositol transfer protein alpha isoform (PITPNA).